The primary structure comprises 224 residues: Biosynthetic peptidoglycan transglycosylase (224 aa).

A helical transmembrane segment spans residues 9 to 29; the sequence is VLILVSFVLLIQLWIFCSLAW.

It belongs to the glycosyltransferase 51 family.

It localises to the cell inner membrane. The enzyme catalyses [GlcNAc-(1-&gt;4)-Mur2Ac(oyl-L-Ala-gamma-D-Glu-L-Lys-D-Ala-D-Ala)](n)-di-trans,octa-cis-undecaprenyl diphosphate + beta-D-GlcNAc-(1-&gt;4)-Mur2Ac(oyl-L-Ala-gamma-D-Glu-L-Lys-D-Ala-D-Ala)-di-trans,octa-cis-undecaprenyl diphosphate = [GlcNAc-(1-&gt;4)-Mur2Ac(oyl-L-Ala-gamma-D-Glu-L-Lys-D-Ala-D-Ala)](n+1)-di-trans,octa-cis-undecaprenyl diphosphate + di-trans,octa-cis-undecaprenyl diphosphate + H(+). The protein operates within cell wall biogenesis; peptidoglycan biosynthesis. Functionally, peptidoglycan polymerase that catalyzes glycan chain elongation from lipid-linked precursors. The protein is Biosynthetic peptidoglycan transglycosylase of Acinetobacter baylyi (strain ATCC 33305 / BD413 / ADP1).